Here is a 77-residue protein sequence, read N- to C-terminus: U14-theraphotoxin-Cg1a 2 (77 aa).

A signal peptide spans 1–21 (MKTSVLLVILGIAAITVQCTA). A propeptide spanning residues 22–49 (SESVKQDSLRTFVDAVLGWNAEMASEAR) is cleaved from the precursor. Cystine bridges form between C50-C64, C57-C69, and C63-C75. K77 is subject to Lysine amide.

Belongs to the neurotoxin 10 (Hwtx-1) family. 65 (Jztx-21) subfamily. In terms of tissue distribution, expressed by the venom gland.

It is found in the secreted. Functionally, probable ion channel inhibitor. This Chilobrachys guangxiensis (Chinese earth tiger tarantula) protein is U14-theraphotoxin-Cg1a 2.